The following is a 623-amino-acid chain: UvrABC system protein C (623 aa).

One can recognise a GIY-YIG domain in the interval Asp13–Ile92. The 36-residue stretch at Asn204–Val239 folds into the UVR domain.

Belongs to the UvrC family. Interacts with UvrB in an incision complex.

Its subcellular location is the cytoplasm. The UvrABC repair system catalyzes the recognition and processing of DNA lesions. UvrC both incises the 5' and 3' sides of the lesion. The N-terminal half is responsible for the 3' incision and the C-terminal half is responsible for the 5' incision. This is UvrABC system protein C from Clostridium acetobutylicum (strain ATCC 824 / DSM 792 / JCM 1419 / IAM 19013 / LMG 5710 / NBRC 13948 / NRRL B-527 / VKM B-1787 / 2291 / W).